The chain runs to 933 residues: uncharacterized protein (933 aa).

A compositionally biased stretch (basic and acidic residues) spans Lys244–Asp255. 2 disordered regions span residues Lys244–Asp277 and Ser343–Gly364. Residues Ser343–Ala353 show a composition bias toward polar residues. Residues Val771 to Leu791 traverse the membrane as a helical segment. Basic and acidic residues predominate over residues Asp890–Glu907. The disordered stretch occupies residues Asp890–Lys933. A compositionally biased stretch (basic residues) spans Lys915 to Lys933.

It localises to the membrane. This is an uncharacterized protein from Mus musculus (Mouse).